Reading from the N-terminus, the 100-residue chain is Small ribosomal subunit protein uS14c (100 aa).

Belongs to the universal ribosomal protein uS14 family. As to quaternary structure, part of the 30S ribosomal subunit.

It localises to the plastid. The protein resides in the chloroplast. Its function is as follows. Binds 16S rRNA, required for the assembly of 30S particles. In Tupiella akineta (Green alga), this protein is Small ribosomal subunit protein uS14c.